The chain runs to 200 residues: uncharacterized protein (200 aa).

The segment at 149-200 (APDPGGSVATEEVLRSDDRDSHTQDSASEWPEGNDSVGSAAMRIDLSRIGGT) is disordered. Basic and acidic residues predominate over residues 160–171 (EVLRSDDRDSHT).

It to A.tumefaciens Ti plasmid conjugal transfer region I ORFR2 and ORFR3.

This is an uncharacterized protein from Sinorhizobium fredii (strain NBRC 101917 / NGR234).